Reading from the N-terminus, the 111-residue chain is Rubredoxin (111 aa).

In terms of domain architecture, Rubredoxin-like spans 11–62 (LDRFECRSCGYVYEPEKGDNKHDIAPETPFAELPINWRCPVCTAKKAAFTNI). 4 residues coordinate Fe cation: Cys-16, Cys-19, Cys-49, and Cys-52.

Belongs to the rubredoxin family. Fe(3+) serves as cofactor.

In terms of biological role, rubredoxin is a small nonheme, iron protein lacking acid-labile sulfide. Its single Fe, chelated to 4 Cys, functions as an electron acceptor and may also stabilize the conformation of the molecule. Could be involved in hydrogenase-linked redox processes. In Nostoc sp. (strain PCC 7120 / SAG 25.82 / UTEX 2576), this protein is Rubredoxin (rub).